The sequence spans 126 residues: Histone H2B type 1-M (126 aa).

Positions 1-36 are disordered; the sequence is MPEPVKSAPVPKKGSKKAINKAQKKDGKKRKRSRKE. Pro2 bears the N-acetylproline mark. Glu3 is subject to ADP-ribosyl glutamic acid. Lys6 carries the post-translational modification N6-(2-hydroxyisobutyryl)lysine; alternate. Residue Lys6 is modified to N6-(beta-hydroxybutyryl)lysine; alternate. Lys6 carries the N6-acetyllysine; alternate modification. Lys6 is modified (N6-butyryllysine; alternate). Lys6 carries the N6-crotonyllysine; alternate modification. At Lys6 the chain carries N6-lactoyllysine; alternate. Lys6 is covalently cross-linked (Glycyl lysine isopeptide (Lys-Gly) (interchain with G-Cter in SUMO2); alternate). ADP-ribosylserine is present on Ser7. Lys12 bears the N6-(beta-hydroxybutyryl)lysine; alternate mark. Residues Lys12 and Lys13 each carry the N6-acetyllysine; alternate modification. 2 positions are modified to N6-crotonyllysine; alternate: Lys12 and Lys13. Residue Lys12 is modified to N6-lactoyllysine; alternate. N6-(2-hydroxyisobutyryl)lysine; alternate is present on Lys13. The residue at position 15 (Ser15) is a Phosphoserine; by STK4/MST1. Residues Lys16, Lys17, Lys21, and Lys24 each carry the N6-acetyllysine; alternate modification. N6-crotonyllysine; alternate occurs at positions 16, 17, 21, and 24. Residues Lys16, Lys17, Lys21, and Lys24 each carry the N6-lactoyllysine; alternate modification. N6-(beta-hydroxybutyryl)lysine; alternate is present on residues Lys17 and Lys21. Lys17 is subject to N6-glutaryllysine; alternate. N6-(2-hydroxyisobutyryl)lysine; alternate is present on residues Lys21 and Lys24. Lys21 is modified (N6-butyryllysine; alternate). Lys21 is covalently cross-linked (Glycyl lysine isopeptide (Lys-Gly) (interchain with G-Cter in SUMO2); alternate). An N6-(2-hydroxyisobutyryl)lysine modification is found at Lys25. At Lys35 the chain carries N6-(2-hydroxyisobutyryl)lysine; alternate. Lys35 bears the N6-(beta-hydroxybutyryl)lysine; alternate mark. Lys35 is modified (N6-crotonyllysine; alternate). Lys35 carries the N6-glutaryllysine; alternate modification. N6-succinyllysine; alternate is present on Lys35. Lys35 participates in a covalent cross-link: Glycyl lysine isopeptide (Lys-Gly) (interchain with G-Cter in ubiquitin); alternate. Position 36 is a polyADP-ribosyl glutamic acid (Glu36). A Phosphoserine; by AMPK modification is found at Ser37. N6-(2-hydroxyisobutyryl)lysine; alternate occurs at positions 44, 47, and 58. Lys44 is subject to N6-lactoyllysine; alternate. N6-glutaryllysine; alternate occurs at positions 44 and 47. Lys47 carries the post-translational modification N6-methyllysine; alternate. An N6,N6-dimethyllysine; alternate modification is found at Lys58. Position 80 is a dimethylated arginine (Arg80). Lys86 is modified (N6-(2-hydroxyisobutyryl)lysine; alternate). The residue at position 86 (Lys86) is an N6-(beta-hydroxybutyryl)lysine; alternate. Position 86 is an N6-acetyllysine; alternate (Lys86). An N6-lactoyllysine; alternate modification is found at Lys86. N6,N6,N6-trimethyllysine; alternate is present on Lys86. Arg87 and Arg93 each carry omega-N-methylarginine. Lys109 carries the N6-(2-hydroxyisobutyryl)lysine; alternate modification. Lys109 bears the N6-lactoyllysine; alternate mark. N6-glutaryllysine; alternate is present on Lys109. Lys109 bears the N6-methyllysine; alternate mark. A glycan (O-linked (GlcNAc) serine) is linked at Ser113. At Thr116 the chain carries Phosphothreonine. N6-(2-hydroxyisobutyryl)lysine; alternate occurs at positions 117 and 121. Lys117 and Lys121 each carry N6-(beta-hydroxybutyryl)lysine; alternate. N6-lactoyllysine; alternate occurs at positions 117 and 121. An N6-glutaryllysine; alternate mark is found at Lys117 and Lys121. An N6-succinyllysine; alternate mark is found at Lys117 and Lys121. Lys117 is subject to N6-malonyllysine; alternate. Lys117 carries the post-translational modification N6-methylated lysine; alternate. Lys121 is covalently cross-linked (Glycyl lysine isopeptide (Lys-Gly) (interchain with G-Cter in ubiquitin); alternate).

The protein belongs to the histone H2B family. As to quaternary structure, the nucleosome is a histone octamer containing two molecules each of H2A, H2B, H3 and H4 assembled in one H3-H4 heterotetramer and two H2A-H2B heterodimers. The octamer wraps approximately 147 bp of DNA. Post-translationally, monoubiquitination at Lys-35 (H2BK34Ub) by the MSL1/MSL2 dimer is required for histone H3 'Lys-4' (H3K4me) and 'Lys-79' (H3K79me) methylation and transcription activation at specific gene loci, such as HOXA9 and MEIS1 loci. Similarly, monoubiquitination at Lys-121 (H2BK120Ub) by the RNF20/40 complex gives a specific tag for epigenetic transcriptional activation and is also prerequisite for histone H3 'Lys-4' and 'Lys-79' methylation. It also functions cooperatively with the FACT dimer to stimulate elongation by RNA polymerase II. H2BK120Ub also acts as a regulator of mRNA splicing: deubiquitination by USP49 is required for efficient cotranscriptional splicing of a large set of exons. Phosphorylation at Ser-37 (H2BS36ph) by AMPK in response to stress promotes transcription. Phosphorylated on Ser-15 (H2BS14ph) by STK4/MST1 during apoptosis; which facilitates apoptotic chromatin condensation. Also phosphorylated on Ser-15 in response to DNA double strand breaks (DSBs), and in correlation with somatic hypermutation and immunoglobulin class-switch recombination. In terms of processing, glcNAcylation at Ser-113 promotes monoubiquitination of Lys-121. It fluctuates in response to extracellular glucose, and associates with transcribed genes. Post-translationally, ADP-ribosylated by PARP1 or PARP2 on Ser-7 (H2BS6ADPr) in response to DNA damage. H2BS6ADPr promotes recruitment of CHD1L. Mono-ADP-ribosylated on Glu-3 (H2BE2ADPr) by PARP3 in response to single-strand breaks. Poly ADP-ribosylation on Glu-36 (H2BE35ADPr) by PARP1 regulates adipogenesis: it inhibits phosphorylation at Ser-37 (H2BS36ph), thereby blocking expression of pro-adipogenetic genes. Crotonylation (Kcr) is specifically present in male germ cells and marks testis-specific genes in post-meiotic cells, including X-linked genes that escape sex chromosome inactivation in haploid cells. Crotonylation marks active promoters and enhancers and confers resistance to transcriptional repressors. It is also associated with post-meiotically activated genes on autosomes. In terms of processing, lactylated in macrophages by EP300/P300 by using lactoyl-CoA directly derived from endogenous or exogenous lactate, leading to stimulates gene transcription.

The protein resides in the nucleus. Its subcellular location is the chromosome. Core component of nucleosome. Nucleosomes wrap and compact DNA into chromatin, limiting DNA accessibility to the cellular machineries which require DNA as a template. Histones thereby play a central role in transcription regulation, DNA repair, DNA replication and chromosomal stability. DNA accessibility is regulated via a complex set of post-translational modifications of histones, also called histone code, and nucleosome remodeling. This Homo sapiens (Human) protein is Histone H2B type 1-M.